A 175-amino-acid chain; its full sequence is Nucleoside triphosphate/diphosphate phosphatase (175 aa).

Residue Arg23 is the Proton donor of the active site. The Mg(2+) site is built by Asn87, Asp103, Asp105, Asp107, Asp120, and Glu123.

The protein belongs to the Ntdp family. The cofactor is Mg(2+).

The enzyme catalyses a ribonucleoside 5'-triphosphate + H2O = a ribonucleoside 5'-diphosphate + phosphate + H(+). It catalyses the reaction a ribonucleoside 5'-diphosphate + H2O = a ribonucleoside 5'-phosphate + phosphate + H(+). Functionally, has nucleoside phosphatase activity towards nucleoside triphosphates and nucleoside diphosphates. In Listeria monocytogenes serotype 4b (strain CLIP80459), this protein is Nucleoside triphosphate/diphosphate phosphatase.